We begin with the raw amino-acid sequence, 96 residues long: UPF0235 protein YPN_3141 (96 aa).

The protein belongs to the UPF0235 family.

This Yersinia pestis bv. Antiqua (strain Nepal516) protein is UPF0235 protein YPN_3141.